The chain runs to 256 residues: MKIITCYKCVPDEQDIAVNNADGSLDFSKADAKISQYDLNAIEAACQLKQQAAEAQVTALSVGGKALTNAKGRKDVLSRGPDELIVVIDDQFEQALPQQTASALAAAAQKAGFDLILCGDGSSDLYAQQVGLLVGEILNIPAVNGVSKIISLTADTLTVERELEDETETLSIPLPAVVAVSTDINSPQIPSMKAILGAAKKPVQVWSAADIGFNAEAAWSEQQVAAPKQRERQRIVIEGDGEEQIAAFAENLRKVI.

The protein belongs to the ETF beta-subunit/FixA family. In terms of assembly, heterodimer of FixA and FixB.

It functions in the pathway amine and polyamine metabolism; carnitine metabolism. In terms of biological role, required for anaerobic carnitine reduction. May bring reductant to CaiA. This Escherichia coli O139:H28 (strain E24377A / ETEC) protein is Protein FixA.